We begin with the raw amino-acid sequence, 174 residues long: Cytochrome c oxidase subunit 5A, mitochondrial (174 aa).

A mitochondrion-targeting transit peptide spans 1 to 29 (MASLTRAVTRLAIAGRQAVRTIATTTPVS).

It belongs to the cytochrome c oxidase subunit 5A family. In terms of assembly, component of the cytochrome c oxidase (complex IV, CIV), a multisubunit enzyme composed of a catalytic core of 3 subunits and several supernumerary subunits. The complex exists as a monomer or a dimer and forms supercomplexes (SCs) in the inner mitochondrial membrane with ubiquinol-cytochrome c oxidoreductase (cytochrome b-c1 complex, complex III, CIII).

It is found in the mitochondrion inner membrane. It functions in the pathway energy metabolism; oxidative phosphorylation. Its function is as follows. Component of the cytochrome c oxidase, the last enzyme in the mitochondrial electron transport chain which drives oxidative phosphorylation. The respiratory chain contains 3 multisubunit complexes succinate dehydrogenase (complex II, CII), ubiquinol-cytochrome c oxidoreductase (cytochrome b-c1 complex, complex III, CIII) and cytochrome c oxidase (complex IV, CIV), that cooperate to transfer electrons derived from NADH and succinate to molecular oxygen, creating an electrochemical gradient over the inner membrane that drives transmembrane transport and the ATP synthase. Cytochrome c oxidase is the component of the respiratory chain that catalyzes the reduction of oxygen to water. Electrons originating from reduced cytochrome c in the intermembrane space (IMS) are transferred via the dinuclear copper A center (CU(A)) of subunit 2 and heme A of subunit 1 to the active site in subunit 1, a binuclear center (BNC) formed by heme A3 and copper B (CU(B)). The BNC reduces molecular oxygen to 2 water molecules using 4 electrons from cytochrome c in the IMS and 4 protons from the mitochondrial matrix. The chain is Cytochrome c oxidase subunit 5A, mitochondrial from Caenorhabditis elegans.